A 98-amino-acid chain; its full sequence is Small ribosomal subunit protein bS6 (98 aa).

Belongs to the bacterial ribosomal protein bS6 family.

Its function is as follows. Binds together with bS18 to 16S ribosomal RNA. The sequence is that of Small ribosomal subunit protein bS6 from Lactobacillus helveticus (strain DPC 4571).